We begin with the raw amino-acid sequence, 318 residues long: Aspartate carbamoyltransferase catalytic subunit (318 aa).

Carbamoyl phosphate-binding residues include R58 and T59. K86 contacts L-aspartate. Carbamoyl phosphate is bound by residues R108, H141, and Q144. Residues R174 and R226 each contribute to the L-aspartate site. Carbamoyl phosphate-binding residues include G270 and P271.

Belongs to the aspartate/ornithine carbamoyltransferase superfamily. ATCase family. Heterododecamer (2C3:3R2) of six catalytic PyrB chains organized as two trimers (C3), and six regulatory PyrI chains organized as three dimers (R2).

It carries out the reaction carbamoyl phosphate + L-aspartate = N-carbamoyl-L-aspartate + phosphate + H(+). Its pathway is pyrimidine metabolism; UMP biosynthesis via de novo pathway; (S)-dihydroorotate from bicarbonate: step 2/3. Catalyzes the condensation of carbamoyl phosphate and aspartate to form carbamoyl aspartate and inorganic phosphate, the committed step in the de novo pyrimidine nucleotide biosynthesis pathway. This is Aspartate carbamoyltransferase catalytic subunit from Lactobacillus helveticus (strain DPC 4571).